Reading from the N-terminus, the 157-residue chain is SsrA-binding protein (157 aa).

Belongs to the SmpB family.

The protein resides in the cytoplasm. Functionally, required for rescue of stalled ribosomes mediated by trans-translation. Binds to transfer-messenger RNA (tmRNA), required for stable association of tmRNA with ribosomes. tmRNA and SmpB together mimic tRNA shape, replacing the anticodon stem-loop with SmpB. tmRNA is encoded by the ssrA gene; the 2 termini fold to resemble tRNA(Ala) and it encodes a 'tag peptide', a short internal open reading frame. During trans-translation Ala-aminoacylated tmRNA acts like a tRNA, entering the A-site of stalled ribosomes, displacing the stalled mRNA. The ribosome then switches to translate the ORF on the tmRNA; the nascent peptide is terminated with the 'tag peptide' encoded by the tmRNA and targeted for degradation. The ribosome is freed to recommence translation, which seems to be the essential function of trans-translation. This is SsrA-binding protein from Chlorobium chlorochromatii (strain CaD3).